A 185-amino-acid polypeptide reads, in one-letter code: Alpha-S1-casein (185 aa).

Residues 1–15 (MRLLILTCLVAVALA) form the signal peptide. Phosphoserine is present on residues Ser31, Ser33, Ser41, Ser71, Ser85, Ser86, Ser88, Ser89, Ser90, and Ser91.

Belongs to the alpha-casein family. Heteromultimers of alpha-s1 casein and kappa-casein; disulfide-linked. In terms of processing, not glycosylated. As to expression, mammary gland specific. Secreted in milk.

The protein localises to the secreted. Important role in the capacity of milk to transport calcium phosphate. In terms of biological role, casoxin D acts as opioid antagonist and has vasorelaxing activity mediated by bradykinin B1 receptors. The sequence is that of Alpha-S1-casein (CSN1S1) from Homo sapiens (Human).